The chain runs to 158 residues: 6,7-dimethyl-8-ribityllumazine synthase (158 aa).

5-amino-6-(D-ribitylamino)uracil is bound by residues tryptophan 27, 58 to 60, and 81 to 83; these read SFE and VII. Position 86 to 87 (86 to 87) interacts with (2S)-2-hydroxy-3-oxobutyl phosphate; sequence GT. The Proton donor role is filled by histidine 89. 5-amino-6-(D-ribitylamino)uracil is bound at residue phenylalanine 114. Arginine 128 is a (2S)-2-hydroxy-3-oxobutyl phosphate binding site.

Belongs to the DMRL synthase family.

It carries out the reaction (2S)-2-hydroxy-3-oxobutyl phosphate + 5-amino-6-(D-ribitylamino)uracil = 6,7-dimethyl-8-(1-D-ribityl)lumazine + phosphate + 2 H2O + H(+). It participates in cofactor biosynthesis; riboflavin biosynthesis; riboflavin from 2-hydroxy-3-oxobutyl phosphate and 5-amino-6-(D-ribitylamino)uracil: step 1/2. Functionally, catalyzes the formation of 6,7-dimethyl-8-ribityllumazine by condensation of 5-amino-6-(D-ribitylamino)uracil with 3,4-dihydroxy-2-butanone 4-phosphate. This is the penultimate step in the biosynthesis of riboflavin. The protein is 6,7-dimethyl-8-ribityllumazine synthase of Leifsonia xyli subsp. xyli (strain CTCB07).